The chain runs to 164 residues: Phosphopantetheine adenylyltransferase (164 aa).

Ser9 lines the substrate pocket. ATP is bound by residues 9-10 (SF) and His17. Substrate is bound by residues Lys41, Leu73, and Lys87. ATP contacts are provided by residues 88 to 90 (GLR), Glu98, and 123 to 129 (HSFLSSS).

Belongs to the bacterial CoaD family. As to quaternary structure, homohexamer. Mg(2+) serves as cofactor.

Its subcellular location is the cytoplasm. The enzyme catalyses (R)-4'-phosphopantetheine + ATP + H(+) = 3'-dephospho-CoA + diphosphate. It participates in cofactor biosynthesis; coenzyme A biosynthesis; CoA from (R)-pantothenate: step 4/5. In terms of biological role, reversibly transfers an adenylyl group from ATP to 4'-phosphopantetheine, yielding dephospho-CoA (dPCoA) and pyrophosphate. The polypeptide is Phosphopantetheine adenylyltransferase (Rubrobacter xylanophilus (strain DSM 9941 / JCM 11954 / NBRC 16129 / PRD-1)).